Reading from the N-terminus, the 894-residue chain is Low-affinity phosphate transporter PHO91 (894 aa).

Residues 1 to 256 (MKFSHSLQFN…NTNLKQNYLN (256 aa)) form the SPX domain. 2 disordered regions span residues 124 to 160 (QHQL…LTDM) and 293 to 321 (RPSN…EDGN). Over residues 132 to 144 (RNRKSKSQQRQRR) the composition is skewed to basic residues. Positions 151-160 (TDSNPSLTDM) are enriched in polar residues. Phosphoserine occurs at positions 295, 311, and 312. The next 13 helical transmembrane spans lie at 430–450 (LKFL…LTPF), 474–494 (TIPL…FPVI), 511–531 (FILS…FTLA), 557–577 (FILL…SNVA), 602–622 (ALIL…PIAS), 642–662 (FMIA…LLII), 682–702 (FTLK…LWCL), 706–726 (ISGI…VFFG), 738–758 (FMWT…AVSS), 777–797 (PIFI…TFVS), 799–819 (TVAA…LPSG), 824–844 (LLIV…TSGF), and 874–894 (SLLS…VMGF).

The protein belongs to the CitM (TC 2.A.11) transporter family. Post-translationally, ubiquitinated by RSP5. RSP5-mediated ubiquitination initiates internalization and degradation by the endocytic pathway.

The protein localises to the vacuole membrane. Vacuolar phosphate transporter that probably exports phosphate from the vacuolar lumen to the cytosol. The sequence is that of Low-affinity phosphate transporter PHO91 (PHO91) from Saccharomyces cerevisiae (strain ATCC 204508 / S288c) (Baker's yeast).